Consider the following 216-residue polypeptide: MAPGSWFSPLLIAVVTLGLPQEAAATFPAMPLSNLFANAVLRAQHLHLLAAETYKEFERTYIPEDQRYTNKNSQAAFCYSETIPAPTGKDDAQQKSDMELLRFSLVLIQSWLTPVQYLSKVFTNNLVFGTSDRVFEKLKDLEEGIQALMRELEDRSPRGPQLLRPTYDKFDIHLRNEDALLKNYGLLSCFKKDLHKVETYLKVMKCRRFGESNCTI.

Positions 1-25 (MAPGSWFSPLLIAVVTLGLPQEAAA) are cleaved as a signal peptide. Position 45 (His45) interacts with Zn(2+). A disulfide bridge connects residues Cys78 and Cys189. Residue Glu198 participates in Zn(2+) binding. A disulfide bridge links Cys206 with Cys214.

The protein belongs to the somatotropin/prolactin family.

The protein resides in the secreted. Growth hormone plays an important role in growth control. The protein is Somatotropin (GH) of Gallus gallus (Chicken).